The chain runs to 467 residues: UDP-N-acetylmuramoylalanine--D-glutamate ligase (467 aa).

118-124 serves as a coordination point for ATP; sequence GTNGKTT.

It belongs to the MurCDEF family.

It is found in the cytoplasm. It catalyses the reaction UDP-N-acetyl-alpha-D-muramoyl-L-alanine + D-glutamate + ATP = UDP-N-acetyl-alpha-D-muramoyl-L-alanyl-D-glutamate + ADP + phosphate + H(+). Its pathway is cell wall biogenesis; peptidoglycan biosynthesis. Functionally, cell wall formation. Catalyzes the addition of glutamate to the nucleotide precursor UDP-N-acetylmuramoyl-L-alanine (UMA). The protein is UDP-N-acetylmuramoylalanine--D-glutamate ligase of Streptomyces avermitilis (strain ATCC 31267 / DSM 46492 / JCM 5070 / NBRC 14893 / NCIMB 12804 / NRRL 8165 / MA-4680).